Consider the following 380-residue polypeptide: Glucose-1-phosphate adenylyltransferase (380 aa).

Residues glycine 164, glutamate 179 to lysine 180, and serine 190 contribute to the alpha-D-glucose 1-phosphate site.

The protein belongs to the bacterial/plant glucose-1-phosphate adenylyltransferase family. Homotetramer.

The catalysed reaction is alpha-D-glucose 1-phosphate + ATP + H(+) = ADP-alpha-D-glucose + diphosphate. It participates in glycan biosynthesis; glycogen biosynthesis. Involved in the biosynthesis of ADP-glucose, a building block required for the elongation reactions to produce glycogen. Catalyzes the reaction between ATP and alpha-D-glucose 1-phosphate (G1P) to produce pyrophosphate and ADP-Glc. In Streptococcus gordonii (strain Challis / ATCC 35105 / BCRC 15272 / CH1 / DL1 / V288), this protein is Glucose-1-phosphate adenylyltransferase.